The sequence spans 80 residues: Type VII secretion system accessory factor EsaB (80 aa).

This sequence belongs to the EsaB family.

The protein resides in the cytoplasm. Functionally, seems to regulate secreted factors that contribute to the establishment of persistent infections in the host. The chain is Type VII secretion system accessory factor EsaB from Staphylococcus aureus (strain COL).